A 427-amino-acid chain; its full sequence is Serine--tRNA ligase (427 aa).

231–233 (TAE) serves as a coordination point for L-serine. 262-264 (RSE) contributes to the ATP binding site. Position 285 (Glu-285) interacts with L-serine. 349–352 (EISS) contacts ATP. Ser-385 provides a ligand contact to L-serine.

Belongs to the class-II aminoacyl-tRNA synthetase family. Type-1 seryl-tRNA synthetase subfamily. In terms of assembly, homodimer. The tRNA molecule binds across the dimer.

It localises to the cytoplasm. The catalysed reaction is tRNA(Ser) + L-serine + ATP = L-seryl-tRNA(Ser) + AMP + diphosphate + H(+). It carries out the reaction tRNA(Sec) + L-serine + ATP = L-seryl-tRNA(Sec) + AMP + diphosphate + H(+). It participates in aminoacyl-tRNA biosynthesis; selenocysteinyl-tRNA(Sec) biosynthesis; L-seryl-tRNA(Sec) from L-serine and tRNA(Sec): step 1/1. Its function is as follows. Catalyzes the attachment of serine to tRNA(Ser). Is also able to aminoacylate tRNA(Sec) with serine, to form the misacylated tRNA L-seryl-tRNA(Sec), which will be further converted into selenocysteinyl-tRNA(Sec). This is Serine--tRNA ligase from Sinorhizobium medicae (strain WSM419) (Ensifer medicae).